The primary structure comprises 180 residues: MSALRPLDKLPGLNTATILLVGTEDALLQQLADSMLKADCTSELKVHLARSLPLPCSVNRPRIDLIVFVVNLHSKLSLQSVEESLCHLDAAFFLGKVAFLATGAGRDSHCSIHRNTVVKLAHTYRSPLLFCDLEIEDFRAAMAQRLVRLLQICAGHVPGVSALNLLSLMRGSENPSLEDL.

Component of the CENPA-NAC complex, at least composed of CENPA, CENPC, CENPH, CENPM, CENPN, CENPT and CENPU. The CENPA-NAC complex interacts with the CENPA-CAD complex, composed of CENPI, CENPK, CENPL, CENPO, CENPP, CENPQ, CENPR and CENPS.

It is found in the nucleus. Its subcellular location is the cytoplasm. The protein localises to the chromosome. It localises to the centromere. The protein resides in the kinetochore. In terms of biological role, component of the CENPA-NAC (nucleosome-associated) complex, a complex that plays a central role in assembly of kinetochore proteins, mitotic progression and chromosome segregation. The CENPA-NAC complex recruits the CENPA-CAD (nucleosome distal) complex and may be involved in incorporation of newly synthesized CENPA into centromeres. The chain is Centromere protein M (CENPM) from Bos taurus (Bovine).